The following is a 144-amino-acid chain: D-aminoacyl-tRNA deacylase (144 aa).

The Gly-cisPro motif, important for rejection of L-amino acids signature appears at 136–137 (GP).

Belongs to the DTD family. Homodimer.

It localises to the cytoplasm. It carries out the reaction glycyl-tRNA(Ala) + H2O = tRNA(Ala) + glycine + H(+). It catalyses the reaction a D-aminoacyl-tRNA + H2O = a tRNA + a D-alpha-amino acid + H(+). Its function is as follows. An aminoacyl-tRNA editing enzyme that deacylates mischarged D-aminoacyl-tRNAs. Also deacylates mischarged glycyl-tRNA(Ala), protecting cells against glycine mischarging by AlaRS. Acts via tRNA-based rather than protein-based catalysis; rejects L-amino acids rather than detecting D-amino acids in the active site. By recycling D-aminoacyl-tRNA to D-amino acids and free tRNA molecules, this enzyme counteracts the toxicity associated with the formation of D-aminoacyl-tRNA entities in vivo and helps enforce protein L-homochirality. This Haemophilus influenzae (strain ATCC 51907 / DSM 11121 / KW20 / Rd) protein is D-aminoacyl-tRNA deacylase.